The chain runs to 677 residues: Methionine--tRNA ligase (677 aa).

The short motif at 15 to 25 is the 'HIGH' region element; it reads PYANGSIHLGH. Zn(2+)-binding residues include Cys146, Cys149, Cys159, and Cys162. The 'KMSKS' region signature appears at 333-337; that stretch reads KMSKS. Lys336 is an ATP binding site. A tRNA-binding domain is found at 575–677; sequence DFAKIDLRVA…DGAKPGQQVK (103 aa).

This sequence belongs to the class-I aminoacyl-tRNA synthetase family. MetG type 1 subfamily. As to quaternary structure, homodimer. Requires Zn(2+) as cofactor.

The protein localises to the cytoplasm. It catalyses the reaction tRNA(Met) + L-methionine + ATP = L-methionyl-tRNA(Met) + AMP + diphosphate. Its function is as follows. Is required not only for elongation of protein synthesis but also for the initiation of all mRNA translation through initiator tRNA(fMet) aminoacylation. In Salmonella paratyphi B (strain ATCC BAA-1250 / SPB7), this protein is Methionine--tRNA ligase.